Consider the following 172-residue polypeptide: Large ribosomal subunit protein uL10 (172 aa).

The protein belongs to the universal ribosomal protein uL10 family. Part of the ribosomal stalk of the 50S ribosomal subunit. The N-terminus interacts with L11 and the large rRNA to form the base of the stalk. The C-terminus forms an elongated spine to which L12 dimers bind in a sequential fashion forming a multimeric L10(L12)X complex.

Forms part of the ribosomal stalk, playing a central role in the interaction of the ribosome with GTP-bound translation factors. In Francisella tularensis subsp. tularensis (strain FSC 198), this protein is Large ribosomal subunit protein uL10.